A 155-amino-acid chain; its full sequence is Small ribosomal subunit protein uS13 (155 aa).

Positions 135–145 (QHTKTTGRRGR) are enriched in basic residues. The interval 135–155 (QHTKTTGRRGRTVGVSRTKGA) is disordered. Low complexity predominate over residues 146 to 155 (TVGVSRTKGA).

This sequence belongs to the universal ribosomal protein uS13 family. Component of the small ribosomal subunit.

It is found in the cytoplasm. Its function is as follows. Component of the small ribosomal subunit. The ribosome is a large ribonucleoprotein complex responsible for the synthesis of proteins in the cell. This chain is Small ribosomal subunit protein uS13 (RPS18), found in Entamoeba histolytica (strain ATCC 30459 / HM-1:IMSS / ABRM).